Consider the following 251-residue polypeptide: Protein crossbronx (251 aa).

A UBC core domain is found at 20 to 176; it reads QQEYKILAEY…TRENIRESLA (157 aa). The tract at residues 211 to 251 is disordered; that stretch reads QSKHLESQSQQSNNGGNGGGGGAATGLSWVKEGEFKPLSVE. The segment covering 225–234 has biased composition (gly residues); it reads GGNGGGGGAA.

It belongs to the ubiquitin-conjugating enzyme family. FTS subfamily.

The polypeptide is Protein crossbronx (cbx) (Drosophila willistoni (Fruit fly)).